The chain runs to 282 residues: HTH-type transcriptional activator RhaR (282 aa).

An HTH araC/xylS-type domain is found at 179–277; sequence DKLITALANS…GMTPSQWRHL (99 aa). DNA-binding regions (H-T-H motif) lie at residues 196-217 and 244-267; these read DAFCQQEQCSERVLRQQFRAQT and VSEISMQCGFEDSNYFSVVFTRET.

In terms of assembly, binds DNA as a dimer.

It localises to the cytoplasm. Functionally, activates expression of the rhaSR operon in response to L-rhamnose. The sequence is that of HTH-type transcriptional activator RhaR from Salmonella choleraesuis (strain SC-B67).